Consider the following 1025-residue polypeptide: Presequence protease, mitochondrial (1025 aa).

Zn(2+) is bound at residue H90. E93 (proton acceptor) is an active-site residue. H94 serves as a coordination point for Zn(2+). Residue E166 is part of the active site. E197 is a binding site for Zn(2+).

Belongs to the peptidase M16 family. PreP subfamily. As to quaternary structure, monomer and homodimer; homodimerization is induced by binding of the substrate. It depends on Zn(2+) as a cofactor.

Its subcellular location is the mitochondrion intermembrane space. The protein resides in the mitochondrion matrix. Functionally, degrades mitochondrial transit peptides after their cleavage in the intermembrane space or in the matrix, and presequence peptides; clearance of these peptides is required to keep the presequence processing machinery running. Preferentially cleaves the N-terminal side of paired basic amino acid residues. Also degrades other unstructured peptides. May function as an ATP-dependent peptidase as opposed to a metalloendopeptidase. The sequence is that of Presequence protease, mitochondrial (cym1) from Aspergillus oryzae (strain ATCC 42149 / RIB 40) (Yellow koji mold).